The primary structure comprises 314 residues: Methionyl-tRNA formyltransferase (314 aa).

112 to 115 (SLLP) serves as a coordination point for (6S)-5,6,7,8-tetrahydrofolate.

This sequence belongs to the Fmt family.

The enzyme catalyses L-methionyl-tRNA(fMet) + (6R)-10-formyltetrahydrofolate = N-formyl-L-methionyl-tRNA(fMet) + (6S)-5,6,7,8-tetrahydrofolate + H(+). Attaches a formyl group to the free amino group of methionyl-tRNA(fMet). The formyl group appears to play a dual role in the initiator identity of N-formylmethionyl-tRNA by promoting its recognition by IF2 and preventing the misappropriation of this tRNA by the elongation apparatus. This chain is Methionyl-tRNA formyltransferase, found in Tolumonas auensis (strain DSM 9187 / NBRC 110442 / TA 4).